A 98-amino-acid polypeptide reads, in one-letter code: Small ribosomal subunit protein uS17 (98 aa).

The tract at residues 1-21 is disordered; the sequence is MADQKGPKYTPAAEKPRGRRK. Residue lysine 96 forms an Isoglutamyl lysine isopeptide (Lys-Gln) (interchain with Q-Cter in protein Pup) linkage.

It belongs to the universal ribosomal protein uS17 family. As to quaternary structure, part of the 30S ribosomal subunit.

Its function is as follows. One of the primary rRNA binding proteins, it binds specifically to the 5'-end of 16S ribosomal RNA. The protein is Small ribosomal subunit protein uS17 (rpsQ) of Mycolicibacterium smegmatis (strain ATCC 700084 / mc(2)155) (Mycobacterium smegmatis).